A 298-amino-acid polypeptide reads, in one-letter code: Acetate permease A (298 aa).

Positions 1 to 43 (MSAEQNHGLEKDVGGPAAPAAAAPNAPAAAPGAPPAGMSAEEH) are disordered. Residues 14 to 37 (GGPAAPAAAAPNAPAAAPGAPPAG) show a composition bias toward low complexity. The next 6 membrane-spanning stretches (helical) occupy residues 86–106 (APLGLSAFALTTFVLSCINMG), 115–135 (IVIALAFGYGGLVQLLAGMWE), 146–166 (ALSSYGGFWIAFAIVLTPGGF), 185–205 (SFGLFLMGWFIFTTIMLFCTL), 210–230 (AFFLLFLFLDLAFLLLGVGYI), and 245–265 (AGGFFGLLAAFAAWYNALAGI).

It belongs to the acetate uptake transporter (AceTr) (TC 2.A.96) family.

It localises to the cell membrane. Its subcellular location is the vacuole membrane. High affinity monocarboxylate transporter (MCT) involved in acetate uptake. Unlike other activities involved in acetate utilization, acpA is dispensable for growth on the acetate precursor ethanol. This chain is Acetate permease A, found in Emericella nidulans (strain FGSC A4 / ATCC 38163 / CBS 112.46 / NRRL 194 / M139) (Aspergillus nidulans).